The following is a 478-amino-acid chain: PRAME family member 11 (478 aa).

Residues Arg99–Cys126 form an LRR 1; degenerate repeat. An LRR 2; degenerate repeat occupies His181–Asn205. The stretch at Leu206–His232 is one LRR 3; degenerate repeat. One copy of the LRR 4; degenerate repeat lies at Leu233–Lys268. 5 LRR repeats span residues Leu269–Leu294, Lys295–Lys326, Thr327–Leu347, Ala351–Arg378, and Cys379–His403.

Belongs to the PRAME family.

The chain is PRAME family member 11 from Homo sapiens (Human).